A 114-amino-acid polypeptide reads, in one-letter code: Small ribosomal subunit protein bS6 (114 aa).

It belongs to the bacterial ribosomal protein bS6 family.

Functionally, binds together with bS18 to 16S ribosomal RNA. This is Small ribosomal subunit protein bS6 from Bacteroides thetaiotaomicron (strain ATCC 29148 / DSM 2079 / JCM 5827 / CCUG 10774 / NCTC 10582 / VPI-5482 / E50).